Consider the following 499-residue polypeptide: Maturase K (499 aa).

Belongs to the intron maturase 2 family. MatK subfamily.

It localises to the plastid. The protein resides in the chloroplast. Functionally, usually encoded in the trnK tRNA gene intron. Probably assists in splicing its own and other chloroplast group II introns. The polypeptide is Maturase K (Camellia sasanqua (Christmas camellia)).